The primary structure comprises 215 residues: Urease accessory protein UreG 2 (215 aa).

11–18 (GPVGSGKT) is a binding site for GTP.

Belongs to the SIMIBI class G3E GTPase family. UreG subfamily. Homodimer. UreD, UreF and UreG form a complex that acts as a GTP-hydrolysis-dependent molecular chaperone, activating the urease apoprotein by helping to assemble the nickel containing metallocenter of UreC. The UreE protein probably delivers the nickel.

The protein localises to the cytoplasm. Its function is as follows. Facilitates the functional incorporation of the urease nickel metallocenter. This process requires GTP hydrolysis, probably effectuated by UreG. The protein is Urease accessory protein UreG 2 of Methylorubrum populi (strain ATCC BAA-705 / NCIMB 13946 / BJ001) (Methylobacterium populi).